Consider the following 130-residue polypeptide: Small ribosomal subunit protein uS8 (130 aa).

Belongs to the universal ribosomal protein uS8 family. As to quaternary structure, part of the 30S ribosomal subunit. Contacts proteins S5 and S12.

In terms of biological role, one of the primary rRNA binding proteins, it binds directly to 16S rRNA central domain where it helps coordinate assembly of the platform of the 30S subunit. This Alcanivorax borkumensis (strain ATCC 700651 / DSM 11573 / NCIMB 13689 / SK2) protein is Small ribosomal subunit protein uS8.